Reading from the N-terminus, the 173-residue chain is Myosin light chain 5 (173 aa).

A disordered region spans residues 1–20 (MASRKTKKKEGGALRAQRAS). 3 consecutive EF-hand domains span residues 30–65 (TQIQEFKEAFTLMDQNRDGFIDKEDLKDTYASLGKT), 100–135 (DAEETILNAFKMLDPDGKGKINKEYIKRLLMSQADK), and 136–171 (MTAEEVDQMFQFASIDVAGNLDYKALSYVITHGEEK). 4 residues coordinate Ca(2+): aspartate 43, asparagine 45, aspartate 47, and aspartate 54.

Myosin is a hexamer of 2 heavy chains and 4 light chains. In terms of tissue distribution, expressed in fetal skeletal muscle and retina.

In Homo sapiens (Human), this protein is Myosin light chain 5 (MYL5).